The chain runs to 148 residues: MLKVKIVRLNKQAFLPVYATRHAAGMDVSACLEAPVVVAPGSAELIATGLAIELPEGYEAQLRPRSGLALRNLISLPNSPATIDADYRGEVKVILVNHGRDPFKVSHGDRIAQMVVARVEQVSFVEVDTLGDTERGEGGFGHTGMGQG.

Residues 65 to 67, Asn-78, 82 to 84, and Lys-92 each bind substrate; these read RSG and TID.

This sequence belongs to the dUTPase family. The cofactor is Mg(2+).

The enzyme catalyses dUTP + H2O = dUMP + diphosphate + H(+). Its pathway is pyrimidine metabolism; dUMP biosynthesis; dUMP from dCTP (dUTP route): step 2/2. Functionally, this enzyme is involved in nucleotide metabolism: it produces dUMP, the immediate precursor of thymidine nucleotides and it decreases the intracellular concentration of dUTP so that uracil cannot be incorporated into DNA. The sequence is that of Deoxyuridine 5'-triphosphate nucleotidohydrolase from Chlorobium luteolum (strain DSM 273 / BCRC 81028 / 2530) (Pelodictyon luteolum).